The following is a 330-amino-acid chain: tRNA-modifying protein YgfZ (330 aa).

Residues W28 and W190 each contribute to the folate site.

This sequence belongs to the tRNA-modifying YgfZ family.

It localises to the cytoplasm. In terms of biological role, folate-binding protein involved in regulating the level of ATP-DnaA and in the modification of some tRNAs. It is probably a key factor in regulatory networks that act via tRNA modification, such as initiation of chromosomal replication. This is tRNA-modifying protein YgfZ from Serratia proteamaculans (strain 568).